We begin with the raw amino-acid sequence, 132 residues long: MTMTDPIADMLTRLRNANSAYHDTVGMPHSKIKSHIAEILQQEGFITGWKVEDAEVGKNLVLELKFGPNRERSIAGIKRISKPGLRVYAKSTNLPKVLGGLGVAIISTSHGLLTDKQAGKKGVGGEVLAYVW.

It belongs to the universal ribosomal protein uS8 family. In terms of assembly, part of the 30S ribosomal subunit. Contacts proteins S5 and S12.

Its function is as follows. One of the primary rRNA binding proteins, it binds directly to 16S rRNA central domain where it helps coordinate assembly of the platform of the 30S subunit. This Streptomyces avermitilis (strain ATCC 31267 / DSM 46492 / JCM 5070 / NBRC 14893 / NCIMB 12804 / NRRL 8165 / MA-4680) protein is Small ribosomal subunit protein uS8.